We begin with the raw amino-acid sequence, 343 residues long: Probable dolichyl-diphosphooligosaccharide--protein glycosyltransferase subunit 3A (343 aa).

A signal peptide spans 1 to 22; it reads MVIQTNLSYRFFILIVFLFTLA. The Lumenal portion of the chain corresponds to 23-185; the sequence is NPKSDSDLKN…TVCSIQRPPL (163 aa). Asparagine 105, asparagine 108, and asparagine 146 each carry an N-linked (GlcNAc...) asparagine glycan. A helical transmembrane segment spans residues 186–206; sequence ISKTQIGIIVAIIIISTPILI. Residues 207–220 are Cytoplasmic-facing; sequence KKILKGETLLHDHR. The helical transmembrane segment at 221 to 241 threads the bilayer; it reads IWLVGAVFVYFFSVSGTMHNI. Over 242 to 273 the chain is Lumenal; sequence IREMPMYIKDYEDSSKFVFFIEESEMQLGAEG. A helical membrane pass occupies residues 274 to 294; sequence FFVGFLYTVVGLLLAFVTNVV. The Cytoplasmic portion of the chain corresponds to 295-304; it reads VRVKKLDEQR. A helical membrane pass occupies residues 305–325; sequence MAMLLALSISFWAVRKVVYLD. Over 326-343 the chain is Lumenal; it reads NWKTGYEIYPYWPSSWRG.

Belongs to the OST3/OST6 family. Component of the oligosaccharyltransferase (OST) complex.

Its subcellular location is the endoplasmic reticulum membrane. Its function is as follows. Subunit of the oligosaccharyl transferase (OST) complex that catalyzes the initial transfer of a defined glycan (Glc(3)Man(9)GlcNAc(2) in eukaryotes) from the lipid carrier dolichol-pyrophosphate to an asparagine residue within an Asn-X-Ser/Thr consensus motif in nascent polypeptide chains, the first step in protein N-glycosylation. N-glycosylation occurs cotranslationally and the complex associates with the Sec61 complex at the channel-forming translocon complex that mediates protein translocation across the endoplasmic reticulum (ER). All subunits are required for a maximal enzyme activity. This is Probable dolichyl-diphosphooligosaccharide--protein glycosyltransferase subunit 3A (OST3A) from Arabidopsis thaliana (Mouse-ear cress).